The primary structure comprises 401 residues: Probable 2,3-bisphosphoglycerate-independent phosphoglycerate mutase (401 aa).

It belongs to the BPG-independent phosphoglycerate mutase family. A-PGAM subfamily.

It catalyses the reaction (2R)-2-phosphoglycerate = (2R)-3-phosphoglycerate. The protein operates within carbohydrate degradation; glycolysis; pyruvate from D-glyceraldehyde 3-phosphate: step 3/5. Its function is as follows. Catalyzes the interconversion of 2-phosphoglycerate and 3-phosphoglycerate. The protein is Probable 2,3-bisphosphoglycerate-independent phosphoglycerate mutase of Thermotoga petrophila (strain ATCC BAA-488 / DSM 13995 / JCM 10881 / RKU-1).